Reading from the N-terminus, the 65-residue chain is Muscarinic m1-toxin2 (65 aa).

4 cysteine pairs are disulfide-bonded: Cys-3/Cys-24, Cys-17/Cys-42, Cys-46/Cys-57, and Cys-58/Cys-63.

It belongs to the three-finger toxin family. Short-chain subfamily. Aminergic toxin sub-subfamily. As to quaternary structure, monomer. Expressed by the venom gland.

The protein localises to the secreted. Functionally, binds irreversibly and specifically to M1 (CHRM1) muscarinic acetylcholine receptors, blocking further binding of antagonists and preventing the action of agonists. This is Muscarinic m1-toxin2 from Dendroaspis angusticeps (Eastern green mamba).